We begin with the raw amino-acid sequence, 362 residues long: Flagellar P-ring protein (362 aa).

The first 15 residues, 1-15, serve as a signal peptide directing secretion; that stretch reads MLAAALMSAAFGAHA.

It belongs to the FlgI family. As to quaternary structure, the basal body constitutes a major portion of the flagellar organelle and consists of four rings (L,P,S, and M) mounted on a central rod.

The protein resides in the periplasm. It is found in the bacterial flagellum basal body. Its function is as follows. Assembles around the rod to form the L-ring and probably protects the motor/basal body from shearing forces during rotation. This chain is Flagellar P-ring protein, found in Pseudomonas fluorescens (strain Pf0-1).